Reading from the N-terminus, the 196-residue chain is ATP-dependent Clp protease proteolytic subunit (196 aa).

S101 acts as the Nucleophile in catalysis. H126 is a catalytic residue.

Belongs to the peptidase S14 family. As to quaternary structure, component of the chloroplastic Clp protease core complex.

Its subcellular location is the plastid. It localises to the chloroplast stroma. The catalysed reaction is Hydrolysis of proteins to small peptides in the presence of ATP and magnesium. alpha-casein is the usual test substrate. In the absence of ATP, only oligopeptides shorter than five residues are hydrolyzed (such as succinyl-Leu-Tyr-|-NHMec, and Leu-Tyr-Leu-|-Tyr-Trp, in which cleavage of the -Tyr-|-Leu- and -Tyr-|-Trp bonds also occurs).. Its function is as follows. Cleaves peptides in various proteins in a process that requires ATP hydrolysis. Has a chymotrypsin-like activity. Plays a major role in the degradation of misfolded proteins. The protein is ATP-dependent Clp protease proteolytic subunit of Lepidium virginicum (Virginia pepperweed).